A 110-amino-acid polypeptide reads, in one-letter code: UPF0060 membrane protein Bcep1808_1236 (110 aa).

A run of 3 helical transmembrane segments spans residues A9–L29, P34–L54, and Y66–L86.

The protein belongs to the UPF0060 family.

It is found in the cell inner membrane. The chain is UPF0060 membrane protein Bcep1808_1236 from Burkholderia vietnamiensis (strain G4 / LMG 22486) (Burkholderia cepacia (strain R1808)).